A 506-amino-acid polypeptide reads, in one-letter code: Cobyric acid synthase (506 aa).

Residues 251-448 (DITIAIVQLP…LHGLFDSDAF (198 aa)) enclose the GATase cobBQ-type domain. Catalysis depends on Cys-332, which acts as the Nucleophile. His-440 is a catalytic residue.

This sequence belongs to the CobB/CobQ family. CobQ subfamily.

It functions in the pathway cofactor biosynthesis; adenosylcobalamin biosynthesis. Its function is as follows. Catalyzes amidations at positions B, D, E, and G on adenosylcobyrinic A,C-diamide. NH(2) groups are provided by glutamine, and one molecule of ATP is hydrogenolyzed for each amidation. The polypeptide is Cobyric acid synthase (Salmonella choleraesuis (strain SC-B67)).